Reading from the N-terminus, the 191-residue chain is Protein 2 in picA locus (191 aa).

It belongs to the acyltransferase 3 family.

It is found in the cell membrane. In terms of biological role, seems to regulate the surface properties of the bacterium in the presence of plant cells or plant cell extracts. The sequence is that of Protein 2 in picA locus from Rhizobium radiobacter (Agrobacterium tumefaciens).